Consider the following 269-residue polypeptide: Short-chain dehydrogenase/reductase ABA4 (269 aa).

Residues Ile34, Asp80, Arg144, Tyr174, Lys178, Ile207, and Thr209 each coordinate NADP(+). The active-site Proton donor is Tyr174. Lys178 acts as the Lowers pKa of active site Tyr in catalysis.

Belongs to the short-chain dehydrogenases/reductases (SDR) family.

Its pathway is hormone biosynthesis. Short-chain dehydrogenase/reductase involved in the biosynthesis of abscisic acid (ABA), a phytohormone that acts antagonistically toward salicylic acid (SA), jasmonic acid (JA) and ethylene (ETH) signaling, to impede plant defense responses. During pathogen-host interaction, ABA plays a dual role in disease severity by increasing plant susceptibility and accelerating pathogenesis in the fungus itself. The first step of the pathway catalyzes the reaction from farnesyl diphosphate to alpha-ionylideneethane performed by the alpha-ionylideneethane synthase ABA3 via a three-step reaction mechanism involving 2 neutral intermediates, beta-farnesene and allofarnesene. The cytochrome P450 monooxygenase ABA1 might then be involved in the conversion of alpha-ionylideneethane to alpha-ionylideneacetic acid. Alpha-ionylideneacetic acid is further converted to abscisic acid in 2 steps involving the cytochrome P450 monooxygenase ABA2 and the short-chain dehydrogenase/reductase ABA4, via the intermediates 1'-deoxy-ABA or 1',4'-trans-diol-ABA, depending on the order of action of these 2 enzymes. ABA2 is responsible for the hydroxylation of carbon atom C-1' and ABA4 might be involved in the oxidation of the C-4' carbon atom. The polypeptide is Short-chain dehydrogenase/reductase ABA4 (ABA4) (Pyricularia oryzae (strain Y34) (Rice blast fungus)).